The sequence spans 245 residues: Triosephosphate isomerase (245 aa).

9-11 is a binding site for substrate; it reads NWK. The Electrophile role is filled by His-92. Glu-164 serves as the catalytic Proton acceptor. Substrate is bound by residues Gly-170, Ser-209, and 230–231; that span reads GG.

The protein belongs to the triosephosphate isomerase family. Homodimer.

It is found in the cytoplasm. It carries out the reaction D-glyceraldehyde 3-phosphate = dihydroxyacetone phosphate. It participates in carbohydrate biosynthesis; gluconeogenesis. It functions in the pathway carbohydrate degradation; glycolysis; D-glyceraldehyde 3-phosphate from glycerone phosphate: step 1/1. Functionally, involved in the gluconeogenesis. Catalyzes stereospecifically the conversion of dihydroxyacetone phosphate (DHAP) to D-glyceraldehyde-3-phosphate (G3P). This Cupriavidus pinatubonensis (strain JMP 134 / LMG 1197) (Cupriavidus necator (strain JMP 134)) protein is Triosephosphate isomerase.